The following is a 391-amino-acid chain: GTPase Obg (391 aa).

An Obg domain is found at 1 to 159; sequence MKFIDEALIR…RDLLLELMLL (159 aa). Residues 160-333 form the OBG-type G domain; it reads ADVGMLGLPN…LTRDIMDFIE (174 aa). Residues 166-173, 191-195, 213-216, 283-286, and 314-316 each bind GTP; these read GLPNAGKS, FTTLV, DIPG, NKID, and SAA. Residues Ser-173 and Thr-193 each coordinate Mg(2+).

This sequence belongs to the TRAFAC class OBG-HflX-like GTPase superfamily. OBG GTPase family. In terms of assembly, monomer. Mg(2+) is required as a cofactor.

Its subcellular location is the cytoplasm. In terms of biological role, an essential GTPase which binds GTP, GDP and possibly (p)ppGpp with moderate affinity, with high nucleotide exchange rates and a fairly low GTP hydrolysis rate. Plays a role in control of the cell cycle, stress response, ribosome biogenesis and in those bacteria that undergo differentiation, in morphogenesis control. This chain is GTPase Obg, found in Haemophilus ducreyi (strain 35000HP / ATCC 700724).